We begin with the raw amino-acid sequence, 469 residues long: Ribulose bisphosphate carboxylase large chain (469 aa).

The propeptide occupies 1-2 (MS). Proline 3 bears the N-acetylproline mark. Lysine 14 bears the N6,N6,N6-trimethyllysine mark. Residues asparagine 123 and threonine 173 each coordinate substrate. Lysine 175 acts as the Proton acceptor in catalysis. Lysine 177 serves as a coordination point for substrate. Residues lysine 201, aspartate 203, and glutamate 204 each contribute to the Mg(2+) site. At lysine 201 the chain carries N6-carboxylysine. The active-site Proton acceptor is the histidine 294. Substrate is bound by residues arginine 295, histidine 327, and serine 379.

It belongs to the RuBisCO large chain family. Type I subfamily. As to quaternary structure, heterohexadecamer of 8 large chains and 8 small chains; disulfide-linked. The disulfide link is formed within the large subunit homodimers. Mg(2+) is required as a cofactor. In terms of processing, the disulfide bond which can form in the large chain dimeric partners within the hexadecamer appears to be associated with oxidative stress and protein turnover.

The protein resides in the plastid. Its subcellular location is the chloroplast. The enzyme catalyses 2 (2R)-3-phosphoglycerate + 2 H(+) = D-ribulose 1,5-bisphosphate + CO2 + H2O. It carries out the reaction D-ribulose 1,5-bisphosphate + O2 = 2-phosphoglycolate + (2R)-3-phosphoglycerate + 2 H(+). In terms of biological role, ruBisCO catalyzes two reactions: the carboxylation of D-ribulose 1,5-bisphosphate, the primary event in carbon dioxide fixation, as well as the oxidative fragmentation of the pentose substrate in the photorespiration process. Both reactions occur simultaneously and in competition at the same active site. The polypeptide is Ribulose bisphosphate carboxylase large chain (Dianthus caryophyllus (Carnation)).